The sequence spans 560 residues: Oxygen-dependent choline dehydrogenase (560 aa).

6-35 is a binding site for FAD; that stretch reads DYIIIGGGSAGSVLGGRLSEDVSNNVLVLE. His-472 functions as the Proton acceptor in the catalytic mechanism.

This sequence belongs to the GMC oxidoreductase family. FAD serves as cofactor.

It catalyses the reaction choline + A = betaine aldehyde + AH2. It carries out the reaction betaine aldehyde + NAD(+) + H2O = glycine betaine + NADH + 2 H(+). The protein operates within amine and polyamine biosynthesis; betaine biosynthesis via choline pathway; betaine aldehyde from choline (cytochrome c reductase route): step 1/1. Its function is as follows. Involved in the biosynthesis of the osmoprotectant glycine betaine. Catalyzes the oxidation of choline to betaine aldehyde and betaine aldehyde to glycine betaine at the same rate. This Staphylococcus xylosus protein is Oxygen-dependent choline dehydrogenase.